Reading from the N-terminus, the 799-residue chain is Protein phosphatase 1 regulatory subunit 3F (799 aa).

The tract at residues methionine 1 to alanine 30 is disordered. The Cytoplasmic portion of the chain corresponds to methionine 1–glycine 772. Over residues valine 7–proline 19 the composition is skewed to pro residues. Serine 18 carries the phosphoserine modification. Positions alanine 20–alanine 30 are enriched in low complexity. The PP1-binding motif signature appears at arginine 36–phenylalanine 39. Disordered stretches follow at residues arginine 53–alanine 108, serine 201–aspartate 235, arginine 332–histidine 353, and alanine 417–alanine 439. Acidic residues predominate over residues alanine 78–phenylalanine 97. The 157-residue stretch at leucine 127–leucine 283 folds into the CBM21 domain. Positions arginine 334–histidine 353 are enriched in basic and acidic residues. Serine 545 carries the phosphoserine modification. Disordered regions lie at residues lysine 566 to isoleucine 600, serine 663 to proline 688, and proline 722 to proline 743. Acidic residues predominate over residues glutamate 569–aspartate 579. Residues proline 585–lysine 594 are compositionally biased toward low complexity. Serine 587 and serine 592 each carry phosphoserine. Basic and acidic residues predominate over residues proline 679–proline 688. Residues leucine 773–leucine 793 form a helical membrane-spanning segment. The Extracellular portion of the chain corresponds to serine 794 to serine 799.

As to expression, highly expressed in brain (at protein level).

The protein resides in the membrane. In terms of biological role, glycogen-targeting subunit for protein phosphatase 1 (PP1). In Mus musculus (Mouse), this protein is Protein phosphatase 1 regulatory subunit 3F (Ppp1r3f).